A 242-amino-acid polypeptide reads, in one-letter code: Uridylate kinase (242 aa).

11–14 (KLSG) is a binding site for ATP. The segment at 19 to 24 (GNMGYG) is involved in allosteric activation by GTP. Gly-53 contacts UMP. ATP contacts are provided by Gly-54 and Arg-58. UMP-binding positions include Asp-73 and 134-141 (SGNPFFTT). ATP is bound by residues Thr-161, Tyr-167, and Asp-170.

It belongs to the UMP kinase family. Homohexamer.

The protein localises to the cytoplasm. The enzyme catalyses UMP + ATP = UDP + ADP. It functions in the pathway pyrimidine metabolism; CTP biosynthesis via de novo pathway; UDP from UMP (UMPK route): step 1/1. Allosterically activated by GTP. Inhibited by UTP. Catalyzes the reversible phosphorylation of UMP to UDP. The sequence is that of Uridylate kinase from Nostoc sp. (strain PCC 7120 / SAG 25.82 / UTEX 2576).